The sequence spans 373 residues: MEVMQVLHMNRGNGENSYAKNSTVQSKIISIGKPIIEEAVHEISCNNVLESMGIADLGCSSGPNTLCVISEIMDMVQATSHRLGHPVPEFRLYLNDLYSNDFNSIFMSLPAFYHRLKEEKGIGCGSCFISGVAGSFYGRLFPSKSLHYVHSSSSLHWLSQVPPGLESNAVTPLNKGKVYISKSSPHSVLHAYSLQFQNDFPMFIESRSQELVSGGRMVLSLFGRRSTDPTTEESCYQWELLAQAIMSLVREGLIEEEKVDSFNTPFYAPCAEEIKVEIQKEGSFIIDRLEGFEIDWDGGAVSDVHTAQGKLLIGQRAAKALRAVVESMLESHFGIGQDIMDDLFSRYAEIVGNHLSKTRTKYFNLVISLTRKG.

An S-adenosyl-L-homocysteine-binding site is contributed by Tyr18. A jasmonate-binding site is contributed by Gln25. Residues Cys59, Asn64, Asp96, Leu97, Ser135, and Phe136 each coordinate S-adenosyl-L-homocysteine. Jasmonate is bound by residues His156 and Trp157. 4 residues coordinate Mg(2+): Asn174, Asp260, Phe262, and Asn263.

This sequence belongs to the methyltransferase superfamily. Type-7 methyltransferase family. Mg(2+) serves as cofactor.

It is found in the cytoplasm. It localises to the nucleus. The catalysed reaction is jasmonate + S-adenosyl-L-methionine = methyl (-)-jasmonate + S-adenosyl-L-homocysteine. It participates in lipid metabolism; oxylipin biosynthesis. Catalyzes the methylation of jasmonate into methyljasmonate, a plant volatile that acts as an important cellular regulator mediating diverse developmental processes and defense responses. In Theobroma cacao (Cacao), this protein is Probable jasmonic acid carboxyl methyltransferase 1.